Reading from the N-terminus, the 218-residue chain is Thiopurine S-methyltransferase (218 aa).

S-adenosyl-L-methionine-binding residues include Trp10, Leu45, Glu66, and Arg123.

It belongs to the class I-like SAM-binding methyltransferase superfamily. TPMT family.

It is found in the cytoplasm. The enzyme catalyses S-adenosyl-L-methionine + a thiopurine = S-adenosyl-L-homocysteine + a thiopurine S-methylether.. This is Thiopurine S-methyltransferase from Xanthomonas axonopodis pv. citri (strain 306).